Consider the following 623-residue polypeptide: NAD-dependent malic enzyme, mitochondrial (623 aa).

A mitochondrion-targeting transit peptide spans 1–31 (MLVLCSRSRLTSSLIRRLKDQIANVSNHRSF). Residues arginine 88 and arginine 122 each contribute to the fumarate site. The active-site Proton donor is the serine 143. Position 196 (arginine 196) interacts with (S)-malate. NAD(+) is bound at residue arginine 196. Catalysis depends on lysine 214, which acts as the Proton acceptor. Positions 285 and 286 each coordinate a divalent metal cation. Asparagine 289 is an NAD(+) binding site. Residue aspartate 309 participates in a divalent metal cation binding. Alanine 345 provides a ligand contact to NAD(+). The (S)-malate site is built by asparagine 464 and asparagine 509.

This sequence belongs to the malic enzymes family. As to quaternary structure, heterodimer of two related subunits. Requires Mg(2+) as cofactor. It depends on Mn(2+) as a cofactor.

The protein resides in the mitochondrion matrix. The enzyme catalyses (S)-malate + NAD(+) = pyruvate + CO2 + NADH. Its pathway is photosynthesis; C4 acid pathway. In Amaranthus hypochondriacus (Prince-of-Wales feather), this protein is NAD-dependent malic enzyme, mitochondrial.